The primary structure comprises 353 residues: DNA polymerase IV (353 aa).

One can recognise a UmuC domain in the interval 14-198; that stretch reads IIHIDMDAFF…MDISKFHGVG (185 aa). Positions 18 and 116 each coordinate Mg(2+). Glutamate 117 is an active-site residue.

The protein belongs to the DNA polymerase type-Y family. As to quaternary structure, monomer. Mg(2+) serves as cofactor.

It localises to the cytoplasm. The catalysed reaction is DNA(n) + a 2'-deoxyribonucleoside 5'-triphosphate = DNA(n+1) + diphosphate. Its function is as follows. Poorly processive, error-prone DNA polymerase involved in untargeted mutagenesis. Copies undamaged DNA at stalled replication forks, which arise in vivo from mismatched or misaligned primer ends. These misaligned primers can be extended by PolIV. Exhibits no 3'-5' exonuclease (proofreading) activity. May be involved in translesional synthesis, in conjunction with the beta clamp from PolIII. In Streptococcus pneumoniae serotype 4 (strain ATCC BAA-334 / TIGR4), this protein is DNA polymerase IV.